A 364-amino-acid polypeptide reads, in one-letter code: MRLLGIETSCDETATAVIEHNLKGKSHILSNIVWSQIEDHAPYGGVVPEIAARAHVEILDTLILEALAKAKTTLKEIDAIAVTGGPGLIGGLLVGLMSAKALAFATGKPFIAVNHLEGHALTAVLTHQVTFPYLLLLVSGGHTQMILVHGVGNYQRLGTTFDDALGEAFDKTAKLLGLPYPGGPALEKAALLGDKNRIPLPRPLKGNKQLNFSFSGLKTAVRQAATAMAPLSEQDVSDIAASFQAAVIDTLQDRVHLALQYFTSQYPSSHNQEHRPPAFVVAGGVAANQAIRLTLQNLAHQHSFEFIAPPPSLCTDNAAMIAFAGAERIARGQTSPLDIAPRSRWPLDENALPLIGTGRRGAKV.

Histidine 115 and histidine 119 together coordinate Fe cation. Substrate-binding positions include 137–141 (LVSGG), aspartate 170, glycine 183, and asparagine 288. Fe cation is bound at residue aspartate 316.

It belongs to the KAE1 / TsaD family. Fe(2+) is required as a cofactor.

It localises to the cytoplasm. It carries out the reaction L-threonylcarbamoyladenylate + adenosine(37) in tRNA = N(6)-L-threonylcarbamoyladenosine(37) in tRNA + AMP + H(+). In terms of biological role, required for the formation of a threonylcarbamoyl group on adenosine at position 37 (t(6)A37) in tRNAs that read codons beginning with adenine. Is involved in the transfer of the threonylcarbamoyl moiety of threonylcarbamoyl-AMP (TC-AMP) to the N6 group of A37, together with TsaE and TsaB. TsaD likely plays a direct catalytic role in this reaction. This Bartonella bacilliformis (strain ATCC 35685 / KC583 / Herrer 020/F12,63) protein is tRNA N6-adenosine threonylcarbamoyltransferase.